A 325-amino-acid polypeptide reads, in one-letter code: GMP reductase (325 aa).

Catalysis depends on Cys174, which acts as the Thioimidate intermediate. 203–226 (LIADGGIRTHGDIAKSIRFGASMV) contributes to the NADP(+) binding site.

It belongs to the IMPDH/GMPR family. GuaC type 2 subfamily.

It catalyses the reaction IMP + NH4(+) + NADP(+) = GMP + NADPH + 2 H(+). Its function is as follows. Catalyzes the irreversible NADPH-dependent deamination of GMP to IMP. It functions in the conversion of nucleobase, nucleoside and nucleotide derivatives of G to A nucleotides, and in maintaining the intracellular balance of A and G nucleotides. The protein is GMP reductase of Staphylococcus aureus (strain MRSA252).